Consider the following 615-residue polypeptide: Deoxyribodipyrimidine photo-lyase (615 aa).

Residues 1–53 (MAPSKRKASAPPQTSHVNGNPSADKKRKTTTDAPPTNPNTSSDPLRAPHPFYK) form a disordered region. A compositionally biased stretch (polar residues) spans 11–21 (PPQTSHVNGNP). The span at 31 to 40 (TDAPPTNPNT) shows a compositional bias: low complexity. Residues 108–249 (QAVVHWFKMD…AADVVHDTCV (142 aa)) form the Photolyase/cryptochrome alpha/beta domain. Y352 lines the FAD pocket. R356 lines the DNA pocket. 364–368 (TSNLS) is an FAD binding site. Interaction with DNA stretches follow at residues 407–414 (EVAWRDFY) and 474–475 (NR). 505 to 507 (DGD) is an FAD binding site. Position 537 (Q537) interacts with DNA.

It belongs to the DNA photolyase class-1 family. As to quaternary structure, monomer. FAD is required as a cofactor. It depends on (6R)-5,10-methylene-5,6,7,8-tetrahydrofolate as a cofactor.

It catalyses the reaction cyclobutadipyrimidine (in DNA) = 2 pyrimidine residues (in DNA).. Functionally, involved in repair of UV radiation-induced DNA damage. Catalyzes the light-dependent monomerization (300-600 nm) of cyclobutyl pyrimidine dimers (in cis-syn configuration), which are formed between adjacent bases on the same DNA strand upon exposure to ultraviolet radiation. The chain is Deoxyribodipyrimidine photo-lyase (phr) from Neurospora crassa (strain ATCC 24698 / 74-OR23-1A / CBS 708.71 / DSM 1257 / FGSC 987).